The following is a 275-amino-acid chain: MWRAGSMSAELGVGCALRAVNERVQQAVARRPRDLPAIQPRLVAVSKTKPADMVIEAYGHGQRTFGENYVQELLEKASNPKILSLCPEIKWHFIGHLQKQNVNKLMAVPNLFMLETVDSVKLADKVNSSWQRKGSPERLKVMVQINTSGEESKHGLPPSETIAIVEHINAKCPNLEFVGLMTIGSFGHDLSQGPNPDFQLLLSLREELCKKLNIPADQVELSMGMSADFQHAVEVGSTNVRIGSTIFGERDYSKKPTPDKCAADVKAPLEVAQEH.

Residue Ser6 is modified to Phosphoserine. The residue at position 47 (Lys47) is an N6-(pyridoxal phosphate)lysine. Phosphotyrosine is present on Tyr69. Lys125 carries the post-translational modification N6-succinyllysine. Phosphoserine is present on residues Ser226 and Ser244. Basic and acidic residues predominate over residues 251–263; the sequence is DYSKKPTPDKCAA. Positions 251 to 275 are disordered; sequence DYSKKPTPDKCAADVKAPLEVAQEH.

This sequence belongs to the pyridoxal phosphate-binding protein YggS/PROSC family. In terms of tissue distribution, ubiquitous.

Its function is as follows. Pyridoxal 5'-phosphate (PLP)-binding protein, which may be involved in intracellular homeostatic regulation of pyridoxal 5'-phosphate (PLP), the active form of vitamin B6. The polypeptide is Pyridoxal phosphate homeostasis protein (Homo sapiens (Human)).